The primary structure comprises 316 residues: Initiation factor TFIIB homolog (316 aa).

The protein belongs to the asfivirus C315R family.

Putative initation factor. The chain is Initiation factor TFIIB homolog from Ornithodoros (relapsing fever ticks).